The primary structure comprises 341 residues: Putative UPF0607 protein ENSP00000383144 (341 aa).

Disordered regions lie at residues 70-131 (RLPK…NPRP) and 218-279 (LMVG…PPAK). The span at 72–101 (PKTEVRAEEPKEATEVKDQVETQEQEDNKR) shows a compositional bias: basic and acidic residues. Residues 108–127 (EAASTSRPLETQGNLTSSWY) are compositionally biased toward polar residues. Positions 243-252 (AGHRSHKRKL) are enriched in basic residues.

The protein belongs to the UPF0607 family.

This Homo sapiens (Human) protein is Putative UPF0607 protein ENSP00000383144.